We begin with the raw amino-acid sequence, 195 residues long: MSNPITITESAQSHFAKLLAQQPEGTNIRVFVVNPGTQNAECGVSYCPPEAVEATDTEYPFSGFSAYVDELSLPFLEEAVIDFVTDKMGSQLTLKAPNAKMRKVSDDASLMERVEYALQTQVNPQLAGHGGHVRLISISDDGVALVQFGGGCNGCSMVDVTLKEGIEKELLAQFAGELTAVRDSTEHDRGEHSYY.

[4Fe-4S] cluster-binding residues include Cys152 and Cys155.

This sequence belongs to the NfuA family. In terms of assembly, homodimer. It depends on [4Fe-4S] cluster as a cofactor.

Involved in iron-sulfur cluster biogenesis. Binds a 4Fe-4S cluster, can transfer this cluster to apoproteins, and thereby intervenes in the maturation of Fe/S proteins. Could also act as a scaffold/chaperone for damaged Fe/S proteins. The sequence is that of Fe/S biogenesis protein NfuA from Vibrio cholerae serotype O1 (strain ATCC 39315 / El Tor Inaba N16961).